Consider the following 37-residue polypeptide: Cortex morphogenetic protein A (37 aa).

Can form a complex with SpoIVA and ClpX.

The protein localises to the forespore. In terms of biological role, ensures proper spore envelope assembly. Represses premature cortex assembly until coat assembly successfully initiates. Also participates in a quality-control pathway that selectively removes defective sporulating cells through regulated cell death. Acts as an adaptator that delivers SpoIVA to the ClpXP proteolytic machinery for degradation, specifically in cells that improperly assemble the spore envelope. This is Cortex morphogenetic protein A from Bacillus subtilis (strain 168).